Consider the following 425-residue polypeptide: Enolase 2 (425 aa).

Gln163 is a (2R)-2-phosphoglycerate binding site. The active-site Proton donor is Glu205. Residues Asp242, Glu285, and Asp312 each coordinate Mg(2+). Residues Lys337, Arg366, Ser367, and Lys388 each coordinate (2R)-2-phosphoglycerate. The Proton acceptor role is filled by Lys337.

Belongs to the enolase family. The cofactor is Mg(2+).

The protein resides in the cytoplasm. The protein localises to the secreted. Its subcellular location is the cell surface. It carries out the reaction (2R)-2-phosphoglycerate = phosphoenolpyruvate + H2O. It functions in the pathway carbohydrate degradation; glycolysis; pyruvate from D-glyceraldehyde 3-phosphate: step 4/5. Catalyzes the reversible conversion of 2-phosphoglycerate (2-PG) into phosphoenolpyruvate (PEP). It is essential for the degradation of carbohydrates via glycolysis. This is Enolase 2 from Cupriavidus metallidurans (strain ATCC 43123 / DSM 2839 / NBRC 102507 / CH34) (Ralstonia metallidurans).